The sequence spans 71 residues: uncharacterized protein (71 aa).

This sequence belongs to the ycf40 family.

The protein resides in the plastid. The protein localises to the chloroplast. This is an uncharacterized protein from Porphyra purpurea (Red seaweed).